Reading from the N-terminus, the 196-residue chain is Regulator of G-protein signaling 1 (196 aa).

The interval 1-27 (MPGMFFSANPKDLKGTDQSLLDDKTQK) is disordered. Residues 11-25 (KDLKGTDQSLLDDKT) show a composition bias toward basic and acidic residues. An RGS domain is found at 72–187 (SLEKLLANQT…LKSNIYLNLL (116 aa)).

In terms of assembly, interacts with GNAI1 and GNAQ.

It localises to the cell membrane. Its subcellular location is the cytoplasm. The protein resides in the cytosol. In terms of biological role, regulates G protein-coupled receptor signaling cascades, including signaling downstream of the N-formylpeptide chemoattractant receptors and leukotriene receptors. Inhibits B cell chemotaxis toward CXCL12. Inhibits signal transduction by increasing the GTPase activity of G protein alpha subunits, thereby driving them into their inactive GDP-bound form. The protein is Regulator of G-protein signaling 1 (RGS1) of Equus caballus (Horse).